The primary structure comprises 118 residues: UPF0125 protein RSc1426 (118 aa).

Belongs to the UPF0125 (RnfH) family.

This Ralstonia nicotianae (strain ATCC BAA-1114 / GMI1000) (Ralstonia solanacearum) protein is UPF0125 protein RSc1426.